A 384-amino-acid polypeptide reads, in one-letter code: Spermidine/putrescine import ATP-binding protein PotA (384 aa).

The region spanning 6-238 (IAFKNVSKVF…PINHFVATFI (233 aa)) is the ABC transporter domain. 40 to 47 (GASGSGKS) provides a ligand contact to ATP.

The protein belongs to the ABC transporter superfamily. Spermidine/putrescine importer (TC 3.A.1.11.1) family. The complex is composed of two ATP-binding proteins (PotA), two transmembrane proteins (PotB and PotC) and a solute-binding protein (PotD).

The protein resides in the cell membrane. The catalysed reaction is ATP + H2O + polyamine-[polyamine-binding protein]Side 1 = ADP + phosphate + polyamineSide 2 + [polyamine-binding protein]Side 1.. Its function is as follows. Part of the ABC transporter complex PotABCD involved in spermidine/putrescine import. Responsible for energy coupling to the transport system. This is Spermidine/putrescine import ATP-binding protein PotA from Streptococcus agalactiae serotype Ia (strain ATCC 27591 / A909 / CDC SS700).